An 86-amino-acid polypeptide reads, in one-letter code: MAQKKGGGSTRNGRDSESKRLGVKVYGGQAINAGGIIIRQRGTRTHAGVNVGMGKDHTLFALVDGHVKFATRGEGKKQFVDVVPAA.

The segment covering 1–10 has biased composition (gly residues); the sequence is MAQKKGGGST. Residues 1–21 are disordered; sequence MAQKKGGGSTRNGRDSESKRL.

It belongs to the bacterial ribosomal protein bL27 family.

The protein is Large ribosomal subunit protein bL27 of Ralstonia nicotianae (strain ATCC BAA-1114 / GMI1000) (Ralstonia solanacearum).